A 170-amino-acid chain; its full sequence is UPF0260 protein RPC_1790 (170 aa).

This sequence belongs to the UPF0260 family.

This chain is UPF0260 protein RPC_1790, found in Rhodopseudomonas palustris (strain BisB18).